The chain runs to 62 residues: Large ribosomal subunit protein bL32 (62 aa).

The protein belongs to the bacterial ribosomal protein bL32 family.

The sequence is that of Large ribosomal subunit protein bL32 from Levilactobacillus brevis (strain ATCC 367 / BCRC 12310 / CIP 105137 / JCM 1170 / LMG 11437 / NCIMB 947 / NCTC 947) (Lactobacillus brevis).